A 220-amino-acid chain; its full sequence is Metalloproteinase inhibitor 2 (220 aa).

The N-terminal stretch at 1-26 (MGAAARSLRLALGLLLLATLPRPADA) is a signal peptide. A Zn(2+)-binding site is contributed by Cys27. 2 involved in metalloproteinase-binding regions span residues 27–30 (CSCS) and 95–96 (SA). Cystine bridges form between Cys27–Cys98, Cys29–Cys127, Cys39–Cys152, Cys154–Cys201, Cys159–Cys164, and Cys172–Cys193. An NTR domain is found at 27 to 152 (CSCSPVHPQQ…SLNHRYQMGC (126 aa)).

Belongs to the protease inhibitor I35 (TIMP) family. Interacts (via the C-terminal) with MMP2 (via the C-terminal PEX domain); the interaction inhibits the MMP2 activity. In terms of processing, the activity of TIMP2 is dependent on the presence of disulfide bonds.

Its subcellular location is the secreted. Its function is as follows. Complexes with metalloproteinases (such as collagenases) and irreversibly inactivates them by binding to their catalytic zinc cofactor. The chain is Metalloproteinase inhibitor 2 (TIMP2) from Canis lupus familiaris (Dog).